We begin with the raw amino-acid sequence, 475 residues long: MSPKTETKASVGFKAGVKDYRLTYYTPEYQTKDTDILAAFRVTPQPGVPPEEAGAAVAAESSTGTWTTVWTDGLTSLDRYKGRCYDIEPVPGEENQYIVYVAYPLDLFEEGSVTNLFTSIVGNVFGFKALRALRLEDLRIPPAYSKTFQGPPHGIQVERDKLNKYGRPLLGCTIKPKLGLSAKNYGRAVYECLRGGLDFTKDDENVNSQPFMRWRDRFCFCAEALFKAQAETGEIKGHYLNATAGTCEEMMKRAVFARELGVPIVMHDYLTGGFTANTSLAHYCRDNGLLLHIHRAMHAVIDRQKNHGMHFRVLAKALRMSGGDHIHAGTVVGKLEGEREVTLGFVDLLRDDFIEKDRSRGIYFTQDWVSMPGVIPVASGGIHVWHMPALTEIFGDDSVLQFGGGTLGHPWGNAPGAVANRVALEACVEARNEGRDLAREGNEVIREASKWSPELAAACEVWKEIIFEFETIDTL.

A propeptide spanning residues 1-2 (MS) is cleaved from the precursor. P3 carries the N-acetylproline modification. Position 14 is an N6,N6,N6-trimethyllysine (K14). Substrate is bound by residues N123 and T173. The Proton acceptor role is filled by K175. Substrate is bound at residue K177. Residues K201, D203, and E204 each coordinate Mg(2+). The residue at position 201 (K201) is an N6-carboxylysine. The active-site Proton acceptor is H294. The substrate site is built by R295, H327, and S379.

It belongs to the RuBisCO large chain family. Type I subfamily. As to quaternary structure, heterohexadecamer of 8 large chains and 8 small chains; disulfide-linked. The disulfide link is formed within the large subunit homodimers. It depends on Mg(2+) as a cofactor. The disulfide bond which can form in the large chain dimeric partners within the hexadecamer appears to be associated with oxidative stress and protein turnover.

It is found in the plastid. The protein localises to the chloroplast. It carries out the reaction 2 (2R)-3-phosphoglycerate + 2 H(+) = D-ribulose 1,5-bisphosphate + CO2 + H2O. The enzyme catalyses D-ribulose 1,5-bisphosphate + O2 = 2-phosphoglycolate + (2R)-3-phosphoglycerate + 2 H(+). Functionally, ruBisCO catalyzes two reactions: the carboxylation of D-ribulose 1,5-bisphosphate, the primary event in carbon dioxide fixation, as well as the oxidative fragmentation of the pentose substrate in the photorespiration process. Both reactions occur simultaneously and in competition at the same active site. This is Ribulose bisphosphate carboxylase large chain from Afrocarpus gracilior (African fern pine).